Reading from the N-terminus, the 117-residue chain is Anti-adapter protein IraM (117 aa).

Belongs to the IraM/RssC family.

Its subcellular location is the cytoplasm. Functionally, involved in the stabilization of the sigma stress factor RpoS. The sequence is that of Anti-adapter protein IraM from Klebsiella pneumoniae (strain 342).